The primary structure comprises 369 residues: tRNA 2-selenouridine synthase (369 aa).

The Rhodanese domain occupies 15–138 (FIAGQPLIDL…MRQYLIGVIE (124 aa)). Residue C98 is the S-selanylcysteine intermediate of the active site.

Belongs to the SelU family. In terms of assembly, monomer.

The catalysed reaction is 5-methylaminomethyl-2-thiouridine(34) in tRNA + selenophosphate + (2E)-geranyl diphosphate + H2O + H(+) = 5-methylaminomethyl-2-selenouridine(34) in tRNA + (2E)-thiogeraniol + phosphate + diphosphate. It carries out the reaction 5-methylaminomethyl-2-thiouridine(34) in tRNA + (2E)-geranyl diphosphate = 5-methylaminomethyl-S-(2E)-geranyl-thiouridine(34) in tRNA + diphosphate. It catalyses the reaction 5-methylaminomethyl-S-(2E)-geranyl-thiouridine(34) in tRNA + selenophosphate + H(+) = 5-methylaminomethyl-2-(Se-phospho)selenouridine(34) in tRNA + (2E)-thiogeraniol. The enzyme catalyses 5-methylaminomethyl-2-(Se-phospho)selenouridine(34) in tRNA + H2O = 5-methylaminomethyl-2-selenouridine(34) in tRNA + phosphate. Involved in the post-transcriptional modification of the uridine at the wobble position (U34) of tRNA(Lys), tRNA(Glu) and tRNA(Gln). Catalyzes the conversion of 2-thiouridine (S2U-RNA) to 2-selenouridine (Se2U-RNA). Acts in a two-step process involving geranylation of 2-thiouridine (S2U) to S-geranyl-2-thiouridine (geS2U) and subsequent selenation of the latter derivative to 2-selenouridine (Se2U) in the tRNA chain. This Shewanella sp. (strain MR-7) protein is tRNA 2-selenouridine synthase.